Consider the following 402-residue polypeptide: S-adenosylmethionine synthase (402 aa).

Histidine 16 serves as a coordination point for ATP. Aspartate 18 lines the Mg(2+) pocket. Glutamate 44 contributes to the K(+) binding site. 2 residues coordinate L-methionine: glutamate 57 and glutamine 109. The flexible loop stretch occupies residues 109-119; it reads QSAHIAQGVDA. ATP-binding positions include 174 to 176, aspartate 252, 258 to 259, alanine 275, and lysine 279; these read DTK and RK. Aspartate 252 is an L-methionine binding site. Lysine 283 serves as a coordination point for L-methionine.

The protein belongs to the AdoMet synthase family. As to quaternary structure, homotetramer; dimer of dimers. Mg(2+) is required as a cofactor. K(+) serves as cofactor.

Its subcellular location is the cytoplasm. It catalyses the reaction L-methionine + ATP + H2O = S-adenosyl-L-methionine + phosphate + diphosphate. The protein operates within amino-acid biosynthesis; S-adenosyl-L-methionine biosynthesis; S-adenosyl-L-methionine from L-methionine: step 1/1. Functionally, catalyzes the formation of S-adenosylmethionine (AdoMet) from methionine and ATP. The overall synthetic reaction is composed of two sequential steps, AdoMet formation and the subsequent tripolyphosphate hydrolysis which occurs prior to release of AdoMet from the enzyme. This is S-adenosylmethionine synthase from Rhizorhabdus wittichii (strain DSM 6014 / CCUG 31198 / JCM 15750 / NBRC 105917 / EY 4224 / RW1) (Sphingomonas wittichii).